A 276-amino-acid chain; its full sequence is Large ribosomal subunit protein uL2 (276 aa).

Disordered stretches follow at residues 33–55 (LVEA…RHIG) and 221–276 (RGTA…AKKK).

It belongs to the universal ribosomal protein uL2 family. As to quaternary structure, part of the 50S ribosomal subunit. Forms a bridge to the 30S subunit in the 70S ribosome.

Functionally, one of the primary rRNA binding proteins. Required for association of the 30S and 50S subunits to form the 70S ribosome, for tRNA binding and peptide bond formation. It has been suggested to have peptidyltransferase activity; this is somewhat controversial. Makes several contacts with the 16S rRNA in the 70S ribosome. The polypeptide is Large ribosomal subunit protein uL2 (Psychrobacter sp. (strain PRwf-1)).